A 503-amino-acid polypeptide reads, in one-letter code: Mitochondrial antiviral-signaling protein (503 aa).

At 1–478 the chain is on the cytoplasmic side; the sequence is MTFAEDKTYK…HCASSMPWAK (478 aa). Residues Lys-7 and Lys-10 each participate in a glycyl lysine isopeptide (Lys-Gly) (interchain with G-Cter in ubiquitin) cross-link. Residues 10-77 enclose the CARD domain; it reads KYIRDNHSKF…WVEVFIRALQ (68 aa). The required for interaction with NLRX1 stretch occupies residues 10–77; it reads KYIRDNHSKF…WVEVFIRALQ (68 aa). Cys-79 carries S-palmitoyl cysteine lipidation. Residues 119 to 202 are disordered; that stretch reads GPSAFAPGHN…HQEQEPELGG (84 aa). An interaction with TRAF2 region spans residues 143–147; that stretch reads PVQDT. The span at 145 to 166 shows a compositional bias: polar residues; it reads QDTQPPESPVENSEQLLQTNSG. Phosphoserine is present on residues Ser-152, Ser-157, Ser-172, Ser-186, and Ser-220. Residues 153–158 are interaction with TRAF6 1; sequence PVENSE. Residues 178–189 are compositionally biased toward polar residues; that stretch reads PSPNQQALSPQP. Asymmetric dimethylarginine is present on Arg-234. Phosphoserine is present on residues Ser-251 and Ser-256. Lys-302 is covalently cross-linked (Glycyl lysine isopeptide (Lys-Gly) (interchain with G-Cter in ubiquitin)). The tract at residues 337-503 is interaction with DHX33; sequence PSRVPASVAK…MLYRSRRLAQ (167 aa). The tract at residues 346–398 is disordered; that stretch reads KAPANTIPPERNSKQAKETPEGPATKVTTGGNQTGPNSSIRSLHSGPEMSKPG. The span at 356 to 365 shows a compositional bias: basic and acidic residues; it reads RNSKQAKETP. The segment covering 371-387 has biased composition (polar residues); it reads KVTTGGNQTGPNSSIRS. Ser-384 carries the phosphoserine modification. The pLxIS motif signature appears at 415–418; it reads LAIS. Phosphoserine; by TBK1 is present on Ser-418. Positions 431–436 are interaction with TRAF6 2; the sequence is PEENEY. Residues 446–466 are disordered; the sequence is SPSADLLGSPEPLATQQPQEE. The helical transmembrane segment at 479–496 threads the bilayer; it reads WLGATSALLAVFLAVMLY. Residues 497-503 lie on the Mitochondrial intermembrane side of the membrane; it reads RSRRLAQ.

In terms of assembly, self-associates and polymerizes (via CARD domains) to form 400 nM long three-stranded helical filaments on mitochondria, filament nucleation requires interaction with RIGI whose CARD domains act as a template for filament assembly. Interacts with RIGI, IFIH1/MDA5, TRAF2, TRAF6 and C1QBP. May interact with FADD, RIPK1, IKBKE, CHUK and IKBKB. Interacts (when phosphorylated) with IRF3; following activation and phosphorylation on the pLxIS motif by TBK1, recruits IRF3. Interacts with NLRX1. Interaction with NLRX1 requires the CARD domain. Interacts with PSMA7. Interacts with TRAFD1. Interacts (via C-terminus) with PCBP2 in a complex containing MAVS/IPS1, PCBP2 and ITCH. Interacts with CYLD. Interacts with SRC. Interacts with DHX58/LGP2 and IKBKE. Interacts with STING1. Interacts with IFIT3 (via N-terminus). Interacts with TBK1 only in the presence of IFIT3. Interacts with TTLL12; the interaction prevents MAVS binding to TBK1 and IKBKE. Interacts with MUL1. Interacts with ANKRD17. Interacts with NDFIP1. Interacts with SMURF1; the interaction is mediated by NDFIP1 and leads to MAVS ubiquitination and degradation. Interacts (via C-terminus) with GPATCH3; the interaction is markedly increased upon viral infection. Directly interacts (via CARD domain) with ATG5 and ATG12, either as ATG5 and ATG12 monomers or as ATG12-ATG5 conjugates. Interacts with DHX33 (via the helicase C-terminal domain). Interacts with DDX3X (via C-terminus); this interaction may occur rapidly, but transiently after viral infection. The interaction with DDX3X potentiates MAVS-mediated IFNB induction. Conversely inhibition of this interaction prevents MAVS-mediated IFNB induction. Transiently interacts with TRAF3 early during viral infection. Interacts with CLPB. Interacts with TRAF3IP3. Interacts with TOMM70; the interaction is enhanced by virus infection. Interacts with ZNFX1. Interacts with DHX15. Interacts with N4BP3; this interaction promotes the polyubiquitination of MAVS. Interacts with TAX1BP1; this interaction induces MAVS polyubiquitination. Interacts with NLRP3; promoting NLRP3 recruitment to mitochondria and activation of the NLRP3 inflammasome. Interacts with ECSIT; this interaction bridges RIGI to the MAVS complex at the mitochondrion. Interacts with UBL7; this interaction promotes MAVS 'Lys-27'-linked ubiquitination leading to type I interferon production. Interacts (via transmembrane domain) with SMIM30/MAVI1 (via transmembrane domain); the interaction disrupts MAVS interaction with RIGI and inhibits MAVS aggregation, resulting in the repression of type I interferon signaling and innate immune responses. In terms of processing, following activation, phosphorylated by TBK1 at Ser-418 in the pLxIS motif. The phosphorylated pLxIS motif constitutes an IRF3-binding motif, leading to recruitment of the transcription factor IRF3 to induce type-I interferons and other cytokines. Post-translationally, ubiquitinated. Undergoes 'Lys-48'-linked polyubiquitination catalyzed by ITCH; ITCH-dependent polyubiquitination is mediated by the interaction with PCBP2 and leads to MAVS/IPS1 proteasomal degradation. Ubiquitinated by RNF125, leading to its degradation by the proteasome. Undergoes 'Lys-48'-linked ubiquitination catalyzed by SMURF1. Undergoes 'Lys-48'-linked ubiquitination catalyzed by MARCHF5 at Lys-7, leading to proteasomal degradation. Ubiquitinated via 'Lys-63'-linked ubiquitination at Lys-10 by TRIM31, promoting MAVS polymerization and formation of three-stranded helical filaments on mitochondria. Undergoes 'Lys-63'-linked ubiquitination leading to enhanced interaction between MAVS and TRAF2. Undergoes 'Lys-27'-linked ubiquitination by UBE2N and TRIM21 leading to enhanced interaction between MAVS and TBK1. Deubiquitinated by USP10 leading to attenuation of RIGI-mediated MAVS aggregation and production of type I interferon. Undergoes 'Lys-48'-linked polyubiquitination catalyzed by RNF115 leading to its degradation. Proteolytically cleaved by apoptotic caspases during apoptosis, leading to its inactivation. Cleavage by CASP3 during virus-induced apoptosis inactivates it, preventing cytokine overproduction. In terms of processing, palmitoylated by ZHDDC4. Palmitoylation promotes MAVS stabilization and activation by inhibiting 'Lys-48'- but facilitating 'Lys-63'-linked ubiquitination.

It is found in the mitochondrion outer membrane. The protein localises to the mitochondrion. It localises to the peroxisome. Functionally, adapter required for innate immune defense against viruses. Acts downstream of DHX33, RIGI and IFIH1/MDA5, which detect intracellular dsRNA produced during viral replication, to coordinate pathways leading to the activation of NF-kappa-B, IRF3 and IRF7, and to the subsequent induction of antiviral cytokines such as IFN-beta and RANTES (CCL5). Peroxisomal and mitochondrial MAVS act sequentially to create an antiviral cellular state. Upon viral infection, peroxisomal MAVS induces the rapid interferon-independent expression of defense factors that provide short-term protection, whereas mitochondrial MAVS activates an interferon-dependent signaling pathway with delayed kinetics, which amplifies and stabilizes the antiviral response. May activate the same pathways following detection of extracellular dsRNA by TLR3. May protect cells from apoptosis. Involved in NLRP3 inflammasome activation by mediating NLRP3 recruitment to mitochondria. The chain is Mitochondrial antiviral-signaling protein from Mus musculus (Mouse).